The following is a 130-amino-acid chain: Histone H2A type 1-D (130 aa).

Positions M1–A22 are disordered. S2 carries the N-acetylserine modification. Residue S2 is modified to Phosphoserine; by RPS6KA5. At R4 the chain carries Citrulline; alternate. R4 bears the Symmetric dimethylarginine; by PRMT5; alternate mark. N6-(2-hydroxyisobutyryl)lysine; alternate occurs at positions 6 and 10. K6 carries the post-translational modification N6-acetyllysine; alternate. The segment covering Q7 to S19 has biased composition (basic residues). K10 and K14 each carry N6-(beta-hydroxybutyryl)lysine; alternate. K10 bears the N6-lactoyllysine; alternate mark. The residue at position 10 (K10) is an N6-succinyllysine; alternate. K14 is covalently cross-linked (Glycyl lysine isopeptide (Lys-Gly) (interchain with G-Cter in ubiquitin); alternate). K16 is covalently cross-linked (Glycyl lysine isopeptide (Lys-Gly) (interchain with G-Cter in ubiquitin)). K37 bears the N6-(2-hydroxyisobutyryl)lysine; alternate mark. K37 carries the N6-(beta-hydroxybutyryl)lysine; alternate modification. K37 carries the post-translational modification N6-crotonyllysine; alternate. N6-(2-hydroxyisobutyryl)lysine occurs at positions 75 and 76. K96 bears the N6-(2-hydroxyisobutyryl)lysine; alternate mark. An N6-(beta-hydroxybutyryl)lysine; alternate modification is found at K96. Position 96 is an N6-succinyllysine; alternate (K96). At K96 the chain carries N6-glutaryllysine; alternate. The residue at position 100 (K100) is an N6-glutaryllysine. At Q105 the chain carries N5-methylglutamine. An N6-(2-hydroxyisobutyryl)lysine; alternate modification is found at K119. K119 carries the post-translational modification N6-(beta-hydroxybutyryl)lysine; alternate. 2 positions are modified to N6-crotonyllysine; alternate: K119 and K120. N6-glutaryllysine; alternate is present on residues K119 and K120. Residue K120 forms a Glycyl lysine isopeptide (Lys-Gly) (interchain with G-Cter in ubiquitin); alternate linkage. The residue at position 121 (T121) is a Phosphothreonine; by DCAF1. K126 carries the N6-crotonyllysine; alternate modification. Position 126 is an N6-glutaryllysine; alternate (K126).

It belongs to the histone H2A family. As to quaternary structure, the nucleosome is a histone octamer containing two molecules each of H2A, H2B, H3 and H4 assembled in one H3-H4 heterotetramer and two H2A-H2B heterodimers. The octamer wraps approximately 147 bp of DNA. Deiminated on Arg-4 in granulocytes upon calcium entry. In terms of processing, monoubiquitination of Lys-120 (H2AK119Ub) by RING1, TRIM37 and RNF2/RING2 complex gives a specific tag for epigenetic transcriptional repression and participates in X chromosome inactivation of female mammals. It is involved in the initiation of both imprinted and random X inactivation. Ubiquitinated H2A is enriched in inactive X chromosome chromatin. Ubiquitination of H2A functions downstream of methylation of 'Lys-27' of histone H3 (H3K27me). H2AK119Ub by RNF2/RING2 can also be induced by ultraviolet and may be involved in DNA repair. Monoubiquitination of Lys-120 (H2AK119Ub) by TRIM37 may promote transformation of cells in a number of breast cancers. Following DNA double-strand breaks (DSBs), it is ubiquitinated through 'Lys-63' linkage of ubiquitin moieties by the E2 ligase UBE2N and the E3 ligases RNF8 and RNF168, leading to the recruitment of repair proteins to sites of DNA damage. Ubiquitination at Lys-14 and Lys-16 (H2AK13Ub and H2AK15Ub, respectively) in response to DNA damage is initiated by RNF168 that mediates monoubiquitination at these 2 sites, and 'Lys-63'-linked ubiquitin are then conjugated to monoubiquitin; RNF8 is able to extend 'Lys-63'-linked ubiquitin chains in vitro. Deubiquitinated by USP51 at Lys-14 and Lys-16 (H2AK13Ub and H2AK15Ub, respectively) after damaged DNA is repaired. H2AK119Ub and ionizing radiation-induced 'Lys-63'-linked ubiquitination (H2AK13Ub and H2AK15Ub) are distinct events. Post-translationally, phosphorylation on Ser-2 (H2AS1ph) is enhanced during mitosis. Phosphorylation on Ser-2 by RPS6KA5/MSK1 directly represses transcription. Acetylation of H3 inhibits Ser-2 phosphorylation by RPS6KA5/MSK1. Phosphorylation at Thr-121 (H2AT120ph) by DCAF1 is present in the regulatory region of many tumor suppresor genes and down-regulates their transcription. Glutamine methylation at Gln-105 (H2AQ104me) by FBL is specifically dedicated to polymerase I. It is present at 35S ribosomal DNA locus and impairs binding of the FACT complex. In terms of processing, symmetric dimethylation on Arg-4 by the PRDM1/PRMT5 complex may play a crucial role in the germ-cell lineage. Post-translationally, crotonylation (Kcr) is specifically present in male germ cells and marks testis-specific genes in post-meiotic cells, including X-linked genes that escape sex chromosome inactivation in haploid cells. Crotonylation marks active promoters and enhancers and confers resistance to transcriptional repressors. It is also associated with post-meiotically activated genes on autosomes. Lactylated in macrophages by EP300/P300 by using lactoyl-CoA directly derived from endogenous or exogenous lactate, leading to stimulates gene transcription.

It localises to the nucleus. It is found in the chromosome. Functionally, core component of nucleosome. Nucleosomes wrap and compact DNA into chromatin, limiting DNA accessibility to the cellular machineries which require DNA as a template. Histones thereby play a central role in transcription regulation, DNA repair, DNA replication and chromosomal stability. DNA accessibility is regulated via a complex set of post-translational modifications of histones, also called histone code, and nucleosome remodeling. This Homo sapiens (Human) protein is Histone H2A type 1-D.